Consider the following 280-residue polypeptide: Aquaporin PIP2-7 (280 aa).

Met1 is modified (N-acetylmethionine). The Cytoplasmic portion of the chain corresponds to 1 to 38 (MSKEVSEEGKTHHGKDYVDPPPAPLLDMGELKSWSFYR). Position 3 is an N6,N6-dimethyllysine (Lys3). Residues 39–59 (ALIAEFIATLLFLYVTVATVI) traverse the membrane as a helical segment. The Extracellular segment spans residues 60-69 (GHKKQTGPCD). A helical membrane pass occupies residues 70-90 (GVGLLGIAWAFGGMIFVLVYC). Over 91–118 (TAGISGGHINPAVTFGLFLARKVSLVRA) the chain is Cytoplasmic. The short motif at 100–102 (NPA) is the NPA 1 element. The chain crosses the membrane as a helical span at residues 119-139 (LGYMIAQCLGAICGVGFVKAF). The Extracellular segment spans residues 140–160 (MKTPYNTLGGGANTVADGYSK). The chain crosses the membrane as a helical span at residues 161-181 (GTALGAEIIGTFVLVYTVFSA). Topologically, residues 182 to 192 (TDPKRSARDSH) are cytoplasmic. A helical membrane pass occupies residues 193–213 (IPVLAPLPIGFAVFMVHLATI). Topologically, residues 214 to 242 (PITGTGINPARSFGAAVIYNNEKAWDDQW) are extracellular. Residues 221-223 (NPA) carry the NPA 2 motif. A helical membrane pass occupies residues 243–263 (IFWVGPFLGALAAAAYHQYIL). Residues 264–280 (RASAIKALGSFRSNATN) lie on the Cytoplasmic side of the membrane. A phosphoserine mark is found at Ser273 and Ser276. The residue at position 279 (Thr279) is a Phosphothreonine.

It belongs to the MIP/aquaporin (TC 1.A.8) family. PIP (TC 1.A.8.11) subfamily. As to quaternary structure, interacts with SYP61 and SYP121 in trafficking vesicles and at the plasma membrane. As to expression, highly expressed in flowers, expressed at low levels in siliques, and at low level in leaves and roots. Highly levels in elongating cells in both roots and shoots.

It is found in the cell membrane. Functionally, water channel required to facilitate the transport of water across cell membrane. May be involved in the osmoregulation in plants under high osmotic stress such as under a high salt condition. This Arabidopsis thaliana (Mouse-ear cress) protein is Aquaporin PIP2-7.